We begin with the raw amino-acid sequence, 1045 residues long: Probable beta-glucosidase E (1045 aa).

The disordered stretch occupies residues 1–74; that stretch reads MAPPDSTHGG…SGSYQLRPVD (74 aa). At 1–163 the chain is on the cytoplasmic side; the sequence is MAPPDSTHGG…PVKYARIWWR (163 aa). Basic and acidic residues predominate over residues 11–20; that stretch reads SFRDHLKTND. The chain crosses the membrane as a helical; Signal-anchor for type II membrane protein span at residues 164–184; it reads TLLAVIVTLAVVVWGFLSFAV. The Extracellular portion of the chain corresponds to 185–1045; it reads SHREEPKVWP…SRDLPLMGEY (861 aa). Residues Asn226, Asn234, and Asn402 are each glycosylated (N-linked (GlcNAc...) asparagine). The active site involves Asp430. Residues Asn473, Asn512, Asn577, Asn893, Asn902, and Asn988 are each glycosylated (N-linked (GlcNAc...) asparagine).

The protein belongs to the glycosyl hydrolase 3 family.

It localises to the cell membrane. The catalysed reaction is Hydrolysis of terminal, non-reducing beta-D-glucosyl residues with release of beta-D-glucose.. Its pathway is glycan metabolism; cellulose degradation. Functionally, beta-glucosidases are one of a number of cellulolytic enzymes involved in the degradation of cellulosic biomass. Catalyzes the last step releasing glucose from the inhibitory cellobiose. This chain is Probable beta-glucosidase E (bglE), found in Neosartorya fischeri (strain ATCC 1020 / DSM 3700 / CBS 544.65 / FGSC A1164 / JCM 1740 / NRRL 181 / WB 181) (Aspergillus fischerianus).